The chain runs to 911 residues: Transcription factor E2F7 (911 aa).

Ser94 carries the post-translational modification Phosphoserine. A DNA-binding region spans residues 141-210; the sequence is RKQKSLGLLC…VAKNQYSWHG (70 aa). 3 disordered regions span residues 239-281, 409-433, and 565-706; these read QKEL…ANSR, SFNS…PYRQ, and SPGS…SPLQ. Basic and acidic residues predominate over residues 243-257; the sequence is NPIDHKSGERRRDGC. The DNA-binding element occupies 281–366; sequence RKDKSLKIMS…GRKPAFKWIG (86 aa). Phosphoserine is present on Ser409. Residues 415–424 show a composition bias toward basic and acidic residues; that stretch reads ASERTQRKVN. The segment covering 566–579 has biased composition (gly residues); that stretch reads PGSGSGSGSVGGGS. The segment covering 599-621 has biased composition (basic and acidic residues); the sequence is ERRLQEEEEEPATKRQCRDHEDG. Residues 669-687 are compositionally biased toward polar residues; sequence KATTNGFVSSEWGNPCSNT. Positions 688–698 are enriched in basic and acidic residues; it reads EIEKPSEENES. A Phosphoserine modification is found at Ser840. The disordered stretch occupies residues 873 to 911; it reads FFKTPGSLGDPVLRRKERNQSRSSSSAQRRLEISSGGTD.

Belongs to the E2F/DP family. As to quaternary structure, homodimer and heterodimer: mainly forms homodimers and, to a lesser extent, heterodimers with E2F8. Dimerization is important for DNA-binding. Interacts with HIF1A. Interacts with MN1.

Its subcellular location is the nucleus. Functionally, atypical E2F transcription factor that participates in various processes such as angiogenesis, polyploidization of specialized cells and DNA damage response. Mainly acts as a transcription repressor that binds DNA independently of DP proteins and specifically recognizes the E2 recognition site 5'-TTTC[CG]CGC-3'. Directly represses transcription of classical E2F transcription factors such as E2F1. Acts as a regulator of S-phase by recognizing and binding the E2-related site 5'-TTCCCGCC-3' and mediating repression of G1/S-regulated genes. Plays a key role in polyploidization of cells in placenta and liver by regulating the endocycle, probably by repressing genes promoting cytokinesis and antagonizing action of classical E2F proteins (E2F1, E2F2 and/or E2F3). Required for placental development by promoting polyploidization of trophoblast giant cells. Also involved in DNA damage response: up-regulated by p53/TP53 following genotoxic stress and acts as a downstream effector of p53/TP53-dependent repression by mediating repression of indirect p53/TP53 target genes involved in DNA replication. Acts as a promoter of sprouting angiogenesis, possibly by acting as a transcription activator: associates with HIF1A, recognizes and binds the VEGFA promoter, which is different from canonical E2 recognition site, and activates expression of the VEGFA gene. Acts as a negative regulator of keratinocyte differentiation. In Bos taurus (Bovine), this protein is Transcription factor E2F7 (E2F7).